The primary structure comprises 487 residues: Pentatricopeptide repeat-containing protein At5g61370, mitochondrial (487 aa).

A mitochondrion-targeting transit peptide spans 1-90; that stretch reads MMSTTVRLNR…TSPRRLLRFF (90 aa). 8 PPR repeats span residues 137–171, 172–202, 207–241, 242–283, 284–318, 319–353, 354–388, and 389–423; these read DKQT…SCPQ, DGFT…HKDV, ELSV…GITP, DLFC…KIQP, TSMS…GCDP, DTGS…GFRP, ERKF…SVGG, and YGQV…DVTL. The interval 466 to 487 is disordered; sequence TKPKLKLKPKRRSKTKKKNLQH.

This sequence belongs to the PPR family. P subfamily.

It localises to the mitochondrion. The polypeptide is Pentatricopeptide repeat-containing protein At5g61370, mitochondrial (Arabidopsis thaliana (Mouse-ear cress)).